We begin with the raw amino-acid sequence, 312 residues long: Ribosomal RNA small subunit methyltransferase H (312 aa).

Residues 32 to 34, aspartate 51, phenylalanine 78, aspartate 99, and glutamine 106 each bind S-adenosyl-L-methionine; that span reads AGH.

Belongs to the methyltransferase superfamily. RsmH family.

The protein localises to the cytoplasm. It carries out the reaction cytidine(1402) in 16S rRNA + S-adenosyl-L-methionine = N(4)-methylcytidine(1402) in 16S rRNA + S-adenosyl-L-homocysteine + H(+). Specifically methylates the N4 position of cytidine in position 1402 (C1402) of 16S rRNA. The chain is Ribosomal RNA small subunit methyltransferase H from Exiguobacterium sibiricum (strain DSM 17290 / CCUG 55495 / CIP 109462 / JCM 13490 / 255-15).